Here is a 363-residue protein sequence, read N- to C-terminus: UDP-N-acetylglucosamine--N-acetylmuramyl-(pentapeptide) pyrophosphoryl-undecaprenol N-acetylglucosamine transferase (363 aa).

UDP-N-acetyl-alpha-D-glucosamine is bound by residues 16–18 (TGG), Asn-128, Arg-167, Ser-195, Ile-249, 268–273 (ALTVSE), and Gln-294.

The protein belongs to the glycosyltransferase 28 family. MurG subfamily.

Its subcellular location is the cell inner membrane. The enzyme catalyses di-trans,octa-cis-undecaprenyl diphospho-N-acetyl-alpha-D-muramoyl-L-alanyl-D-glutamyl-meso-2,6-diaminopimeloyl-D-alanyl-D-alanine + UDP-N-acetyl-alpha-D-glucosamine = di-trans,octa-cis-undecaprenyl diphospho-[N-acetyl-alpha-D-glucosaminyl-(1-&gt;4)]-N-acetyl-alpha-D-muramoyl-L-alanyl-D-glutamyl-meso-2,6-diaminopimeloyl-D-alanyl-D-alanine + UDP + H(+). It participates in cell wall biogenesis; peptidoglycan biosynthesis. In terms of biological role, cell wall formation. Catalyzes the transfer of a GlcNAc subunit on undecaprenyl-pyrophosphoryl-MurNAc-pentapeptide (lipid intermediate I) to form undecaprenyl-pyrophosphoryl-MurNAc-(pentapeptide)GlcNAc (lipid intermediate II). This is UDP-N-acetylglucosamine--N-acetylmuramyl-(pentapeptide) pyrophosphoryl-undecaprenol N-acetylglucosamine transferase from Marinobacter nauticus (strain ATCC 700491 / DSM 11845 / VT8) (Marinobacter aquaeolei).